We begin with the raw amino-acid sequence, 1096 residues long: cAMP/cGMP-dependent 3',5'-cAMP/cGMP phosphodiesterase B (1096 aa).

The segment at 216 to 248 is disordered; it reads SSSKMIINDSPRTQQRNGTTEQQKKQQQQQYLQ. The segment covering 225 to 236 has biased composition (polar residues); it reads SPRTQQRNGTTE. H573, H575, and D577 together coordinate a divalent metal cation. A nucleoside 3',5'-cyclic phosphate contacts are provided by residues 783–930 and 946–1070; these read VFSK…DLSH and ITQH…EDNI.

Belongs to the metallo-beta-lactamase superfamily. cNMP phosphodiesterase family. Mn(2+) serves as cofactor. Mg(2+) is required as a cofactor. It depends on Zn(2+) as a cofactor.

The protein localises to the cytoplasm. It localises to the cytosol. The enzyme catalyses 3',5'-cyclic AMP + H2O = AMP + H(+). It catalyses the reaction 3',5'-cyclic GMP + H2O = GMP + H(+). Its function is as follows. Dual specificity cAMP and cGMP phosphodiesterase with marked preference for cyclic AMP, which is activated by cAMP and cGMP. Likely functions as a cAMP-stimulated cAMP-phosphodiesterase which may play a role in regulating the cAMP relay response. In Dictyostelium discoideum (Social amoeba), this protein is cAMP/cGMP-dependent 3',5'-cAMP/cGMP phosphodiesterase B (pdeE).